Reading from the N-terminus, the 490-residue chain is Phosphoglucosamine mutase (490 aa).

Residue Ser139 is the Phosphoserine intermediate of the active site. Residues Ser139, Asp279, Asp281, and Asp283 each contribute to the Mg(2+) site. At Ser139 the chain carries Phosphoserine.

The protein belongs to the phosphohexose mutase family. Mg(2+) is required as a cofactor. Activated by phosphorylation.

It carries out the reaction alpha-D-glucosamine 1-phosphate = D-glucosamine 6-phosphate. Catalyzes the conversion of glucosamine-6-phosphate to glucosamine-1-phosphate. In Trichormus variabilis (strain ATCC 29413 / PCC 7937) (Anabaena variabilis), this protein is Phosphoglucosamine mutase.